We begin with the raw amino-acid sequence, 265 residues long: Hydroxyethylthiazole kinase (265 aa).

Met-50 serves as a coordination point for substrate. 2 residues coordinate ATP: Arg-125 and Thr-171. Gly-198 provides a ligand contact to substrate.

It belongs to the Thz kinase family. It depends on Mg(2+) as a cofactor.

The enzyme catalyses 5-(2-hydroxyethyl)-4-methylthiazole + ATP = 4-methyl-5-(2-phosphooxyethyl)-thiazole + ADP + H(+). It participates in cofactor biosynthesis; thiamine diphosphate biosynthesis; 4-methyl-5-(2-phosphoethyl)-thiazole from 5-(2-hydroxyethyl)-4-methylthiazole: step 1/1. Functionally, catalyzes the phosphorylation of the hydroxyl group of 4-methyl-5-beta-hydroxyethylthiazole (THZ). This Salmonella arizonae (strain ATCC BAA-731 / CDC346-86 / RSK2980) protein is Hydroxyethylthiazole kinase.